Here is a 493-residue protein sequence, read N- to C-terminus: GPI alpha-1,6-mannosyltransferase 2 (493 aa).

Residues 1-13 (MWPQDPSRKEVLR) are Cytoplasmic-facing. Residues 14–34 (FAVSCRILTLMLQALFNAIIP) traverse the membrane as a helical segment. Residues 35–77 (DHHAEAFSPPRLAPSGFVDQLVEGLLGGLSHWDAEHFLFIAEH) are Lumenal-facing. A helical transmembrane segment spans residues 78-98 (GYLYEHNFAFFPGFPLALLVG). Over 99–113 (TELLRPLRGLLSLRS) the chain is Cytoplasmic. A helical membrane pass occupies residues 114–134 (CLLISVASLNFLFFMLAAVAL). Residues 135 to 136 (HD) lie on the Lumenal side of the membrane. The chain crosses the membrane as a helical span at residues 137–157 (LGCLVLHCPHQSFYAALLFCL). The Cytoplasmic segment spans residues 158 to 161 (SPAN). The helical transmembrane segment at 162 to 182 (VFLAAGYSEALFALLTFSAMG) threads the bilayer. Residues 183–192 (QLERGRVWTS) are Lumenal-facing. A helical membrane pass occupies residues 193 to 213 (VLLFAFATGVRSNGLVSVGFL). Topologically, residues 214–234 (MHSQCQGFFSSLTMLNPLRQL) are cytoplasmic. Residues 235-255 (FKLMASLFLSVFTLGLPFALF) form a helical membrane-spanning segment. Over 256-327 (QYYAYTQFCL…KYYELKQVPN (72 aa)) the chain is Lumenal. Residues 328–348 (FLLAAPVAILVAWATWTYVTT) form a helical membrane-spanning segment. Residues 349–378 (HPWLCLTLGLQRSKNNKTLEKPDLGFLSPQ) are Cytoplasmic-facing. The chain crosses the membrane as a helical span at residues 379 to 399 (VFVYVVHAAVLLLFGGLCMHV). Over 400–469 (QVLTRFLGSS…HWKTCSPVTR (70 aa)) the chain is Lumenal. Residues 470–490 (YILGYFLTYWLLGLLLHCNFL) form a helical membrane-spanning segment. The Cytoplasmic portion of the chain corresponds to 491 to 493 (PWT).

Belongs to the PIGV family. Not N-glycosylated.

Its subcellular location is the endoplasmic reticulum membrane. It participates in glycolipid biosynthesis; glycosylphosphatidylinositol-anchor biosynthesis. Its function is as follows. Alpha-1,6-mannosyltransferase that catalyzes the transfer of the second mannose, via an alpha-1,6 bond, from a dolichol-phosphate-mannose (Dol-P-Man) to the alpha-D-Man-(1-&gt;4)-alpha-D-GlcN-(1-&gt;6)-(1-radyl,2-acyl-sn-glycero-3-phospho)-2-acyl-inositol (also termed H2) intermediate to generate an alpha-D-Man-(1-&gt;6)-alpha-D-Man-(1-&gt;4)-alpha-D-GlcN-(1-&gt;6)-(1-radyl,2-acyl-sn-glycero-3-phospho)-2-acyl-inositol (also termed H3) and participates in the seventh step of the glycosylphosphatidylinositol-anchor biosynthesis. Also transfers the second mannose on a 2-PEtn-alpha-D-Man-(1-&gt;4)-alpha-D-GlcN-(1-&gt;6)-(1-radyl,2-acyl-sn-glycero-3-phospho)-2-acyl-inositol (also termed H5). The sequence is that of GPI alpha-1,6-mannosyltransferase 2 from Homo sapiens (Human).